The sequence spans 166 residues: Ribosome maturation factor RimP (166 aa).

It belongs to the RimP family.

It is found in the cytoplasm. Functionally, required for maturation of 30S ribosomal subunits. The protein is Ribosome maturation factor RimP of Psychrobacter cryohalolentis (strain ATCC BAA-1226 / DSM 17306 / VKM B-2378 / K5).